The sequence spans 409 residues: tRNA-specific 2-thiouridylase MnmA (409 aa).

Residues Gly40 to Ser47 and Leu66 each bind ATP. The active-site Nucleophile is Cys127. Cys127 and Cys237 are joined by a disulfide. Gly152 lines the ATP pocket. The segment at Arg156–Leu179 is disordered. The tract at residues Lys187–Gln189 is interaction with tRNA. Cys237 acts as the Cysteine persulfide intermediate in catalysis. The interaction with tRNA stretch occupies residues Arg342–Tyr343.

Belongs to the MnmA/TRMU family.

The protein resides in the cytoplasm. It catalyses the reaction S-sulfanyl-L-cysteinyl-[protein] + uridine(34) in tRNA + AH2 + ATP = 2-thiouridine(34) in tRNA + L-cysteinyl-[protein] + A + AMP + diphosphate + H(+). In terms of biological role, catalyzes the 2-thiolation of uridine at the wobble position (U34) of tRNA, leading to the formation of s(2)U34. The polypeptide is tRNA-specific 2-thiouridylase MnmA (Prochlorococcus marinus (strain MIT 9303)).